Reading from the N-terminus, the 426-residue chain is Putative nickel insertion protein (426 aa).

The protein belongs to the LarC family.

The chain is Putative nickel insertion protein from Nostoc sp. (strain PCC 7120 / SAG 25.82 / UTEX 2576).